Reading from the N-terminus, the 246-residue chain is Probable transcriptional regulatory protein AHA_1522 (246 aa).

Belongs to the TACO1 family.

Its subcellular location is the cytoplasm. The chain is Probable transcriptional regulatory protein AHA_1522 from Aeromonas hydrophila subsp. hydrophila (strain ATCC 7966 / DSM 30187 / BCRC 13018 / CCUG 14551 / JCM 1027 / KCTC 2358 / NCIMB 9240 / NCTC 8049).